The following is a 183-amino-acid chain: U3 small nucleolar ribonucleoprotein protein imp3 (183 aa).

Residues 108 to 174 (RRLPVVMRNI…IKKHVMDYNN (67 aa)) enclose the S4 RNA-binding domain.

It belongs to the universal ribosomal protein uS4 family. As to quaternary structure, component of a heterotrimeric complex containing imp3, imp4 and mpp10.

Its subcellular location is the nucleus. It is found in the nucleolus. In terms of biological role, component of the U3 small nucleolar ribonucleoprotein. Required for the early cleavages at sites A0, A1 and A2 during 18S ribosomal pre-RNA processing. In Caenorhabditis elegans, this protein is U3 small nucleolar ribonucleoprotein protein imp3.